We begin with the raw amino-acid sequence, 269 residues long: Cytochrome c oxidase subunit 3 (269 aa).

7 helical membrane passes run 21-41, 45-65, 90-110, 138-160, 167-187, 205-225, and 247-267; these read PWPIVVSFSLLSLALSLALAM, IGNMNLVWLALFVLTSSATLW, GFLLFVVSEVLIFAGLFWAYF, PLLNTIILLASGATVTYSHHALI, ALSGLFITTWLIIIFVICQYI, FYAGTGLHFLHMVMLATMLAI, and VIYLHVLDIIWLFLYIVFYWW.

This sequence belongs to the cytochrome c oxidase subunit 3 family. In terms of assembly, component of the cytochrome c oxidase (complex IV, CIV), a multisubunit enzyme composed of a catalytic core of 3 subunits and several supernumerary subunits. The complex exists as a monomer or a dimer and forms supercomplexes (SCs) in the inner mitochondrial membrane with ubiquinol-cytochrome c oxidoreductase (cytochrome b-c1 complex, complex III, CIII).

The protein localises to the mitochondrion inner membrane. It catalyses the reaction 4 Fe(II)-[cytochrome c] + O2 + 8 H(+)(in) = 4 Fe(III)-[cytochrome c] + 2 H2O + 4 H(+)(out). Its function is as follows. Component of the cytochrome c oxidase, the last enzyme in the mitochondrial electron transport chain which drives oxidative phosphorylation. The respiratory chain contains 3 multisubunit complexes succinate dehydrogenase (complex II, CII), ubiquinol-cytochrome c oxidoreductase (cytochrome b-c1 complex, complex III, CIII) and cytochrome c oxidase (complex IV, CIV), that cooperate to transfer electrons derived from NADH and succinate to molecular oxygen, creating an electrochemical gradient over the inner membrane that drives transmembrane transport and the ATP synthase. Cytochrome c oxidase is the component of the respiratory chain that catalyzes the reduction of oxygen to water. Electrons originating from reduced cytochrome c in the intermembrane space (IMS) are transferred via the dinuclear copper A center (CU(A)) of subunit 2 and heme A of subunit 1 to the active site in subunit 1, a binuclear center (BNC) formed by heme A3 and copper B (CU(B)). The BNC reduces molecular oxygen to 2 water molecules using 4 electrons from cytochrome c in the IMS and 4 protons from the mitochondrial matrix. This Lachancea kluyveri (strain ATCC 58438 / CBS 3082 / BCRC 21498 / NBRC 1685 / JCM 7257 / NCYC 543 / NRRL Y-12651) (Yeast) protein is Cytochrome c oxidase subunit 3 (COX3).